The primary structure comprises 293 residues: MSNSNWLEKILPAVRRPQESRRNNIPEGLWRKCPRCEGVVYRPELDRNMDVCPKCDHHLRISARRRLKLFLDEGVQTEIGTELSPVDRLKFKDSKKYKDRLVAAQKATDEKDALVVLKGALHGEPLVACAFEFSFMGGSMGSVVGERFVRAVNVCLEQKLPLVCFAASGGARMQEALFSLMQMAKTSAALEKMRQAGLPFISVLTDPVYGGVSASLAMLGDVNVAEPNALIGFAGPRVIEQTVRQKLPEGFQRSEFLLEHGAIDMIVSRHDMRETLYRLLANMMGWPPLALDD.

The CoA carboxyltransferase N-terminal domain maps to leucine 29–aspartate 293. Zn(2+)-binding residues include cysteine 33, cysteine 36, cysteine 52, and cysteine 55. The C4-type zinc-finger motif lies at cysteine 33–cysteine 55.

The protein belongs to the AccD/PCCB family. In terms of assembly, acetyl-CoA carboxylase is a heterohexamer composed of biotin carboxyl carrier protein (AccB), biotin carboxylase (AccC) and two subunits each of ACCase subunit alpha (AccA) and ACCase subunit beta (AccD). Zn(2+) serves as cofactor.

The protein localises to the cytoplasm. It catalyses the reaction N(6)-carboxybiotinyl-L-lysyl-[protein] + acetyl-CoA = N(6)-biotinyl-L-lysyl-[protein] + malonyl-CoA. It participates in lipid metabolism; malonyl-CoA biosynthesis; malonyl-CoA from acetyl-CoA: step 1/1. In terms of biological role, component of the acetyl coenzyme A carboxylase (ACC) complex. Biotin carboxylase (BC) catalyzes the carboxylation of biotin on its carrier protein (BCCP) and then the CO(2) group is transferred by the transcarboxylase to acetyl-CoA to form malonyl-CoA. This Alcanivorax borkumensis (strain ATCC 700651 / DSM 11573 / NCIMB 13689 / SK2) protein is Acetyl-coenzyme A carboxylase carboxyl transferase subunit beta.